The following is a 456-amino-acid chain: Bifunctional protein GlmU (456 aa).

Residues 1–229 form a pyrophosphorylase region; the sequence is MYNCAIILAA…FEETMGVNSR (229 aa). UDP-N-acetyl-alpha-D-glucosamine is bound by residues 8–11, lysine 22, glutamine 73, and 78–79; these read LAAG and GT. Aspartate 103 provides a ligand contact to Mg(2+). Positions 140, 155, 170, and 227 each coordinate UDP-N-acetyl-alpha-D-glucosamine. Mg(2+) is bound at residue asparagine 227. The interval 230-250 is linker; the sequence is VQLAEAEKIMRNRINKIHMEN. An N-acetyltransferase region spans residues 251–456; that stretch reads GVTLIDHNNT…SWVYKKGLKK (206 aa). UDP-N-acetyl-alpha-D-glucosamine is bound by residues arginine 332 and lysine 350. The active-site Proton acceptor is the histidine 362. UDP-N-acetyl-alpha-D-glucosamine contacts are provided by tyrosine 365 and asparagine 376. Acetyl-CoA-binding positions include 385–386, alanine 422, and arginine 439; that span reads NY.

This sequence in the N-terminal section; belongs to the N-acetylglucosamine-1-phosphate uridyltransferase family. In the C-terminal section; belongs to the transferase hexapeptide repeat family. As to quaternary structure, homotrimer. Mg(2+) is required as a cofactor.

Its subcellular location is the cytoplasm. The enzyme catalyses alpha-D-glucosamine 1-phosphate + acetyl-CoA = N-acetyl-alpha-D-glucosamine 1-phosphate + CoA + H(+). It catalyses the reaction N-acetyl-alpha-D-glucosamine 1-phosphate + UTP + H(+) = UDP-N-acetyl-alpha-D-glucosamine + diphosphate. It participates in nucleotide-sugar biosynthesis; UDP-N-acetyl-alpha-D-glucosamine biosynthesis; N-acetyl-alpha-D-glucosamine 1-phosphate from alpha-D-glucosamine 6-phosphate (route II): step 2/2. The protein operates within nucleotide-sugar biosynthesis; UDP-N-acetyl-alpha-D-glucosamine biosynthesis; UDP-N-acetyl-alpha-D-glucosamine from N-acetyl-alpha-D-glucosamine 1-phosphate: step 1/1. It functions in the pathway bacterial outer membrane biogenesis; LPS lipid A biosynthesis. In terms of biological role, catalyzes the last two sequential reactions in the de novo biosynthetic pathway for UDP-N-acetylglucosamine (UDP-GlcNAc). The C-terminal domain catalyzes the transfer of acetyl group from acetyl coenzyme A to glucosamine-1-phosphate (GlcN-1-P) to produce N-acetylglucosamine-1-phosphate (GlcNAc-1-P), which is converted into UDP-GlcNAc by the transfer of uridine 5-monophosphate (from uridine 5-triphosphate), a reaction catalyzed by the N-terminal domain. The polypeptide is Bifunctional protein GlmU (Clostridium kluyveri (strain NBRC 12016)).